Reading from the N-terminus, the 198-residue chain is 5'-deoxynucleotidase hdd1 (198 aa).

In terms of domain architecture, HD spans 38-144; the sequence is IADHMYRMGI…VKDIDKFEMI (107 aa). Residues histidine 41, histidine 69, aspartate 70, glutamate 73, aspartate 78, isoleucine 79, and aspartate 139 each coordinate a divalent metal cation.

It belongs to the HDDC2 family. In terms of assembly, homodimer. Requires Mn(2+) as cofactor. Co(2+) is required as a cofactor. The cofactor is Mg(2+).

It localises to the cytoplasm. The protein localises to the nucleus. It carries out the reaction a 2'-deoxyribonucleoside 5'-phosphate + H2O = a 2'-deoxyribonucleoside + phosphate. Its function is as follows. Catalyzes the dephosphorylation of the nucleoside 5'-monophosphates deoxyadenosine monophosphate (dAMP), deoxycytidine monophosphate (dCMP), deoxyguanosine monophosphate (dGMP) and deoxythymidine monophosphate (dTMP). This Schizosaccharomyces pombe (strain 972 / ATCC 24843) (Fission yeast) protein is 5'-deoxynucleotidase hdd1.